We begin with the raw amino-acid sequence, 151 residues long: Probable cGMP 3',5'-cyclic phosphodiesterase subunit delta (151 aa).

It belongs to the PDE6D/unc-119 family. In terms of assembly, interacts with Pde6.

It localises to the nucleus. Its subcellular location is the cytoplasm. The sequence is that of Probable cGMP 3',5'-cyclic phosphodiesterase subunit delta from Drosophila grimshawi (Hawaiian fruit fly).